A 432-amino-acid chain; its full sequence is MDQFLITGRSRIAGEVTISGAKNAALPLLAAMILAETPTTLNNVPSLQDVRTLIKLIAGLGIRIEKQGDTVTCDTSTIENYFAPYELVKTMRASILVLGPLLARFGEAEVSLPGGCAIGSRPVDQHLKAFKAMGAEITVENGYVKARAPEGGRLIGCEFSFDMVTVGGTENVLIAATLAKGTTVLENCAREPEVVDLANMLVAMGAKVSGIGTATLTIEGVDSLQGCEYSVVPDRIETGSYLAGALMTEGDVTTKNTDPALLQPVLQKFEEMGAIITTGDDWIRAQMTGRPKPVDIRTQPHPGFPTDMQAQLMAVCCLAEGTSTISENIFENRYMHVPELKRMGADIQVDGHTAIIRGVDSFNAAPVMATDLRASMSLVMAAAAAEGETLIDRIYHIDRGYENVEEKLRGLGVNIERVNPVTDAAEADSLDD.

A phosphoenolpyruvate-binding site is contributed by 22 to 23; the sequence is KN. Residue Arg-92 participates in UDP-N-acetyl-alpha-D-glucosamine binding. Cys-116 acts as the Proton donor in catalysis. Cys-116 carries the 2-(S-cysteinyl)pyruvic acid O-phosphothioketal modification. UDP-N-acetyl-alpha-D-glucosamine contacts are provided by residues 121-125, Asp-307, and Ile-329; that span reads RPVDQ.

The protein belongs to the EPSP synthase family. MurA subfamily.

It is found in the cytoplasm. The catalysed reaction is phosphoenolpyruvate + UDP-N-acetyl-alpha-D-glucosamine = UDP-N-acetyl-3-O-(1-carboxyvinyl)-alpha-D-glucosamine + phosphate. It participates in cell wall biogenesis; peptidoglycan biosynthesis. Cell wall formation. Adds enolpyruvyl to UDP-N-acetylglucosamine. The sequence is that of UDP-N-acetylglucosamine 1-carboxyvinyltransferase from Psychrobacter sp. (strain PRwf-1).